Consider the following 2839-residue polypeptide: Bifunctional DNA-directed RNA polymerase subunit beta-beta' (2839 aa).

The interval 1-1433 is DNA-directed RNA polymerase subunit beta; that stretch reads MVDSSYMCAS…CLNVALKQNN (1433 aa). Residues 1436-2839 are DNA-directed RNA polymerase subunit beta'; sequence IEDISHTNIA…KESVAESRYN (1404 aa). The Zn(2+) site is built by Cys-1501, Cys-1503, Cys-1516, and Cys-1519. Mg(2+)-binding residues include Asp-1893, Asp-1895, and Asp-1897. Zn(2+) contacts are provided by Cys-2238, Cys-2312, Cys-2319, and Cys-2322.

In the N-terminal section; belongs to the RNA polymerase beta chain family. This sequence in the C-terminal section; belongs to the RNA polymerase beta' chain family. In terms of assembly, the RNAP catalytic core consists of 2 alpha, 1 beta/beta' and 1 omega subunit. When a sigma factor is associated with the core the holoenzyme is formed, which can initiate transcription. Mg(2+) serves as cofactor. Requires Zn(2+) as cofactor.

The catalysed reaction is RNA(n) + a ribonucleoside 5'-triphosphate = RNA(n+1) + diphosphate. DNA-dependent RNA polymerase catalyzes the transcription of DNA into RNA using the four ribonucleoside triphosphates as substrates. The polypeptide is Bifunctional DNA-directed RNA polymerase subunit beta-beta' (rpoBC) (Wolbachia sp. subsp. Brugia malayi (strain TRS)).